The following is a 704-amino-acid chain: G-protein coupled receptor-associated protein LMBRD2B (704 aa).

The Extracellular segment spans residues 1 to 3; it reads MSG. The helical transmembrane segment at 4–21 threads the bilayer; it reads AALGIEIVVVFFLALFLL. The Cytoplasmic segment spans residues 22-33; sequence HRYGDFKKQQRM. The chain crosses the membrane as a helical span at residues 34–54; the sequence is VLFGTLLAWYLCFLIVFILPL. Topologically, residues 55-111 are extracellular; that stretch reads DVSTTIYNQCLIDQEAQTQTPSVSPVLSEQTTANASISPAKSTQRVCYKPWSYIPDG. N88 carries N-linked (GlcNAc...) asparagine glycosylation. A helical membrane pass occupies residues 112–132; that stretch reads IMPVFWRVVYWTSQCLTWLLL. At 133 to 157 the chain is on the cytoplasmic side; it reads PFMQSYARSGGFTITGKIKTALIEN. The chain crosses the membrane as a helical span at residues 158 to 178; sequence AIYYGTYLFIFGSLLIYVAVH. Topologically, residues 179–192 are extracellular; the sequence is PQWHLSWYELQTIG. The chain crosses the membrane as a helical span at residues 193–213; that stretch reads ITAANTWGLFLLVLLLGYGLV. Topologically, residues 214–393 are cytoplasmic; that stretch reads DIPRSYWEAS…ECLLKQWFYR (180 aa). Residues 235-266 adopt a coiled-coil conformation; sequence KAAKLMTEKADSEENLEDVMEEVRKINESIKY. A helical transmembrane segment spans residues 394-414; sequence VLAVVLALFSVAVVWSECTFF. Topologically, residues 415 to 438 are extracellular; the sequence is STHPVLSLFAVFIQLAERDYNYLY. The chain crosses the membrane as a helical span at residues 439 to 459; that stretch reads IEMACFITIFFLCTCVYSTVF. The Cytoplasmic segment spans residues 460–481; sequence RIRVFNYYYLASHHQTDAYSLQ. The chain crosses the membrane as a helical span at residues 482–502; that stretch reads FSGMLFCRLTPPLCLNFLGLI. The Extracellular portion of the chain corresponds to 503–527; it reads HMDSAISHQAKKQTAYTSIMGSMRV. Residues 528–548 traverse the membrane as a helical segment; it reads LSFIANGFYIYYPMLIVVLCI. The Cytoplasmic segment spans residues 549 to 704; that stretch reads ATYFSLGTRC…SSRNRIFDDV (156 aa). Residues 576-612 adopt a coiled-coil conformation; it reads DLIDEGRELLRRERRKRQRIEDGENRRREWRERYAQR. Disordered regions lie at residues 613–654 and 672–704; these read DENA…QSGR and TLTD…FDDV. Positions 631 to 654 are enriched in polar residues; sequence YGETLNANTNRQAKYTRSGSQSGR.

This sequence belongs to the LIMR family.

It is found in the cell membrane. In terms of biological role, may associate with G-protein coupled receptors and regulate downstream signaling pathways. In Danio rerio (Zebrafish), this protein is G-protein coupled receptor-associated protein LMBRD2B (lmbrd2b).